The chain runs to 166 residues: UPF0304 protein VFMJ11_1926 (166 aa).

This sequence belongs to the UPF0304 family.

The chain is UPF0304 protein VFMJ11_1926 from Aliivibrio fischeri (strain MJ11) (Vibrio fischeri).